The sequence spans 446 residues: Phosphoglucosamine mutase (446 aa).

The active-site Phosphoserine intermediate is Ser100. Mg(2+)-binding residues include Ser100, Asp239, Asp241, and Asp243. A Phosphoserine modification is found at Ser100.

This sequence belongs to the phosphohexose mutase family. Mg(2+) is required as a cofactor. Post-translationally, activated by phosphorylation.

It catalyses the reaction alpha-D-glucosamine 1-phosphate = D-glucosamine 6-phosphate. Functionally, catalyzes the conversion of glucosamine-6-phosphate to glucosamine-1-phosphate. The sequence is that of Phosphoglucosamine mutase from Oceanobacillus iheyensis (strain DSM 14371 / CIP 107618 / JCM 11309 / KCTC 3954 / HTE831).